The following is a 192-amino-acid chain: Fe/S biogenesis protein NfuA (192 aa).

2 residues coordinate [4Fe-4S] cluster: C149 and C152.

This sequence belongs to the NfuA family. Homodimer. Requires [4Fe-4S] cluster as cofactor.

Functionally, involved in iron-sulfur cluster biogenesis. Binds a 4Fe-4S cluster, can transfer this cluster to apoproteins, and thereby intervenes in the maturation of Fe/S proteins. Could also act as a scaffold/chaperone for damaged Fe/S proteins. The chain is Fe/S biogenesis protein NfuA from Shewanella baltica (strain OS223).